Here is a 292-residue protein sequence, read N- to C-terminus: Probable 2-(5''-triphosphoribosyl)-3'-dephosphocoenzyme-A synthase (292 aa).

The protein belongs to the CitG/MdcB family.

The enzyme catalyses 3'-dephospho-CoA + ATP = 2'-(5''-triphospho-alpha-D-ribosyl)-3'-dephospho-CoA + adenine. Functionally, involved in the formation of 2-(5''-phosphoribosyl)-3'-dephosphocoenzyme-A, the prosthetic group of the acyl-carrier protein of the malonate decarboxylase. The polypeptide is Probable 2-(5''-triphosphoribosyl)-3'-dephosphocoenzyme-A synthase (Azotobacter vinelandii (strain DJ / ATCC BAA-1303)).